A 286-amino-acid polypeptide reads, in one-letter code: Inositol polyphosphate multikinase alpha (286 aa).

Residues 1–22 (MQLKVPEHQVAGHIAKDGKPGP) are disordered.

It belongs to the inositol phosphokinase (IPK) family. In terms of processing, phosphorylated. In terms of tissue distribution, detected in leaves, stems, roots, siliques and flowers. Highly expressed in root tissues, anthers, the stigma, pollen grains and growing pollen tubes.

The protein localises to the nucleus. The protein resides in the cell membrane. The catalysed reaction is 1D-myo-inositol 1,4,5-trisphosphate + 2 ATP = 1D-myo-inositol 1,3,4,5,6-pentakisphosphate + 2 ADP + 2 H(+). It carries out the reaction 1D-myo-inositol 1,3,4,6-tetrakisphosphate + ATP = 1D-myo-inositol 1,3,4,5,6-pentakisphosphate + ADP + H(+). Its function is as follows. Inositol phosphate kinase with a broad substrate specificity. Phosphorylates inositol 1,4,5-trisphosphate (Ins(1,4,5)P3), inositol 1,4,5,6-tetrakisphosphate (Ins(1,4,5,6)P4), inositol 1,3,4,5-tetrakisphosphate (Ins(1,3,4,5)P4), inositol 1,3,4,6-tetrakisphosphate (Ins(1,3,4,6)P4) and inositol 1,2,3,4,6-pentakisphosphate (Ins(1,2,3,4,6)P5) but not inositol 1,4-bisphosphate (Ins(1,4)P2), inositol 1,3,4-trisphosphate (Ins(1,3,4)P3), inositol 1,2,6-trisphosphate (Ins(1,2,6)P3), inositol 3,4,5,6-tetrakisphosphate (Ins(3,4,5,6)P4), inositol 1,3,4,5,6-pentakisphosphate (Ins(1,3,4,5,6)P5), inositol 1,2,4,5,6-pentakisphosphate (Ins(1,2,4,5,6)P5) or inositol hexakisphosphate (InsP6). Regulates pollen and root development probably through the regulation of InsP3-mediated calcium accumulation. In Arabidopsis thaliana (Mouse-ear cress), this protein is Inositol polyphosphate multikinase alpha (IPK2a).